The chain runs to 378 residues: Isobutylamine N-hydroxylase (378 aa).

As to quaternary structure, exists in dimeric or trimeric form depending upon buffer conditions. It can form an isobutylamine N-hydroxylase two component enzyme system formed of a flavin reductase component (VlmR) and a monooxygenase component (VlmH).

It carries out the reaction 2-methylpropan-1-amine + FADH2 + O2 = N-(2-methylpropyl)hydroxylamine + FAD + H2O + 2 H(+). It catalyses the reaction 2-methylpropan-1-amine + FMNH2 + O2 = N-(2-methylpropyl)hydroxylamine + FMN + H2O + 2 H(+). Its activity is regulated as follows. Inhibited by 5',5'-dithio-bis(2-nitrobenzoic acid) (DTNB) and 4-(hydroxymercuri)benzoic acid (p-HMB). Involved in the biosynthesis of the azoxy antibiotic valanimycin, which has an antitumor activity. Catalyzes the oxidation of isobutylamine to isobutylhydroxylamine via the formation of a flavin 4a-hydroperoxide. Unlike other known N-hydroxylases, isobutylamine N-hydroxylase cannot carry out the reduction of the flavin cofactor and requires the NADPH-flavin oxidoreductase VlmR. Also able to oxidize propan-1-amine, butan-1-amine, butan-2-amine and benzylamine. It has a similar activity with either FMNH(2) or FADH(2). In Streptomyces viridifaciens, this protein is Isobutylamine N-hydroxylase.